Consider the following 163-residue polypeptide: Epithelial membrane protein 3 (163 aa).

Residues 4–24 (LLLVVSALHILILVLLFVATL) form a helical membrane-spanning segment. N-linked (GlcNAc...) asparagine glycosylation is found at Asn-46 and Asn-56. 3 helical membrane-spanning segments follow: residues 66–86 (VQAL…LFMF), 100–120 (TGLC…IYAI), and 139–159 (FALA…YIHL).

It belongs to the PMP-22/EMP/MP20 family.

The protein resides in the membrane. Probably involved in cell proliferation and cell-cell interactions. The protein is Epithelial membrane protein 3 (Emp3) of Mus musculus (Mouse).